We begin with the raw amino-acid sequence, 278 residues long: Large ribosomal subunit protein uL2 (278 aa).

The segment at 222 to 278 is disordered; that stretch reads GVVMNPIDHPHGGGEGRTSGGRHPVTPWGKPTKGKKTRSNKSTDKFILISRHKRKKK.

Belongs to the universal ribosomal protein uL2 family. Part of the 50S ribosomal subunit. Forms a bridge to the 30S subunit in the 70S ribosome.

Its function is as follows. One of the primary rRNA binding proteins. Required for association of the 30S and 50S subunits to form the 70S ribosome, for tRNA binding and peptide bond formation. It has been suggested to have peptidyltransferase activity; this is somewhat controversial. Makes several contacts with the 16S rRNA in the 70S ribosome. This Rhodopseudomonas palustris (strain BisB5) protein is Large ribosomal subunit protein uL2.